We begin with the raw amino-acid sequence, 261 residues long: MKIRVGVIGCLGRMGKKILNELITNTKVEIAGAVARSGSKYIDSDIGPIIANLGIKVTSSISGIFESSDVVIDFTTKECMLDCLKAAVKFKTPLVSGTTGIEGVDLKEYAAEVPILWSANMSVGVNVLLKLVKKAAELLGNEYDVEIWEMHHNLKKDSPSGTAIELGKTIANASKVDFQSNQYLHSGSNIRKKGGIGFAVSRGGGVIGDHSVMFVNSDERIELNHKAIDRTTFARGAVQAAVWLYENKREIPGLYSMQDVI.

NAD(+) is bound at residue 9-14 (GCLGRM). Arg36 is an NADP(+) binding site. NAD(+) contacts are provided by residues 97–99 (GTT) and 118–121 (SANM). The active-site Proton donor/acceptor is the His151. His152 provides a ligand contact to (S)-2,3,4,5-tetrahydrodipicolinate. Residue Lys155 is the Proton donor of the active site. (S)-2,3,4,5-tetrahydrodipicolinate is bound at residue 161-162 (GT).

This sequence belongs to the DapB family.

It is found in the cytoplasm. It catalyses the reaction (S)-2,3,4,5-tetrahydrodipicolinate + NAD(+) + H2O = (2S,4S)-4-hydroxy-2,3,4,5-tetrahydrodipicolinate + NADH + H(+). The catalysed reaction is (S)-2,3,4,5-tetrahydrodipicolinate + NADP(+) + H2O = (2S,4S)-4-hydroxy-2,3,4,5-tetrahydrodipicolinate + NADPH + H(+). It participates in amino-acid biosynthesis; L-lysine biosynthesis via DAP pathway; (S)-tetrahydrodipicolinate from L-aspartate: step 4/4. In terms of biological role, catalyzes the conversion of 4-hydroxy-tetrahydrodipicolinate (HTPA) to tetrahydrodipicolinate. The sequence is that of 4-hydroxy-tetrahydrodipicolinate reductase from Wolbachia pipientis wMel.